Consider the following 259-residue polypeptide: UPF0246 protein PSPTO_1244 (259 aa).

The protein belongs to the UPF0246 family.

The sequence is that of UPF0246 protein PSPTO_1244 from Pseudomonas syringae pv. tomato (strain ATCC BAA-871 / DC3000).